The sequence spans 316 residues: Beta-ketoacyl-[acyl-carrier-protein] synthase III (316 aa).

Catalysis depends on residues C112 and H243. Positions 244 to 248 are ACP-binding; the sequence is QANIR. Residue N273 is part of the active site.

The protein belongs to the thiolase-like superfamily. FabH family. In terms of assembly, homodimer.

The protein resides in the cytoplasm. It catalyses the reaction malonyl-[ACP] + acetyl-CoA + H(+) = 3-oxobutanoyl-[ACP] + CO2 + CoA. The protein operates within lipid metabolism; fatty acid biosynthesis. Functionally, catalyzes the condensation reaction of fatty acid synthesis by the addition to an acyl acceptor of two carbons from malonyl-ACP. Catalyzes the first condensation reaction which initiates fatty acid synthesis and may therefore play a role in governing the total rate of fatty acid production. Possesses both acetoacetyl-ACP synthase and acetyl transacylase activities. Its substrate specificity determines the biosynthesis of branched-chain and/or straight-chain of fatty acids. This is Beta-ketoacyl-[acyl-carrier-protein] synthase III from Actinobacillus pleuropneumoniae serotype 5b (strain L20).